Here is a 193-residue protein sequence, read N- to C-terminus: ATP-dependent Clp protease proteolytic subunit (193 aa).

Residue serine 98 is the Nucleophile of the active site. Residue histidine 123 is part of the active site.

Belongs to the peptidase S14 family. Fourteen ClpP subunits assemble into 2 heptameric rings which stack back to back to give a disk-like structure with a central cavity, resembling the structure of eukaryotic proteasomes.

Its subcellular location is the cytoplasm. The enzyme catalyses Hydrolysis of proteins to small peptides in the presence of ATP and magnesium. alpha-casein is the usual test substrate. In the absence of ATP, only oligopeptides shorter than five residues are hydrolyzed (such as succinyl-Leu-Tyr-|-NHMec, and Leu-Tyr-Leu-|-Tyr-Trp, in which cleavage of the -Tyr-|-Leu- and -Tyr-|-Trp bonds also occurs).. In terms of biological role, cleaves peptides in various proteins in a process that requires ATP hydrolysis. Has a chymotrypsin-like activity. Plays a major role in the degradation of misfolded proteins. ClpXP is involved in the complete degradation of the Site-2 clipped anti-sigma-W factor RsiW. This results in the release of SigW and the transcription activation of the genes under the control of the sigma-W factor. This is ATP-dependent Clp protease proteolytic subunit from Oceanobacillus iheyensis (strain DSM 14371 / CIP 107618 / JCM 11309 / KCTC 3954 / HTE831).